The following is a 739-amino-acid chain: Polyribonucleotide nucleotidyltransferase (739 aa).

Residues Asp-489 and Asp-495 each coordinate Mg(2+). The KH domain occupies 556-615; it reads PKIDTIKIDVDKIKIVIGKGGETIDKIIAETGVKIDIDEDGLVAIFSPDRAAIERTKEII. Positions 625-693 constitute an S1 motif domain; that stretch reads DEVFQAKVVR…DKGRIDASMK (69 aa). Residues 699–739 are disordered; it reads PEGYVEPEKRERSEKPRRHKEHKEKKDNNFGEFKFHKVDKK. The segment covering 722–739 has biased composition (basic and acidic residues); that stretch reads EKKDNNFGEFKFHKVDKK.

Belongs to the polyribonucleotide nucleotidyltransferase family. Mg(2+) serves as cofactor.

Its subcellular location is the cytoplasm. It catalyses the reaction RNA(n+1) + phosphate = RNA(n) + a ribonucleoside 5'-diphosphate. Its function is as follows. Involved in mRNA degradation. Catalyzes the phosphorolysis of single-stranded polyribonucleotides processively in the 3'- to 5'-direction. This is Polyribonucleotide nucleotidyltransferase from Streptococcus suis (strain 98HAH33).